The following is a 200-amino-acid chain: Small ribosomal subunit protein uS4 (200 aa).

Residues 22-42 are disordered; it reads TGKELEKRPYAPGPHGPNQRK. Residues 92–152 form the S4 RNA-binding domain; the sequence is ARLDNLVYRM…EKSNNLVVVK (61 aa).

The protein belongs to the universal ribosomal protein uS4 family. In terms of assembly, part of the 30S ribosomal subunit. Contacts protein S5. The interaction surface between S4 and S5 is involved in control of translational fidelity.

Functionally, one of the primary rRNA binding proteins, it binds directly to 16S rRNA where it nucleates assembly of the body of the 30S subunit. Its function is as follows. With S5 and S12 plays an important role in translational accuracy. In Bacillus cereus (strain Q1), this protein is Small ribosomal subunit protein uS4.